Reading from the N-terminus, the 897-residue chain is Chromodomain-helicase-DNA-binding protein 1-like (897 aa).

Arginine 9 bears the Omega-N-methylarginine mark. In terms of domain architecture, Helicase ATP-binding spans 58-223 (AQRFHCQNGC…YSLLSFVEPD (166 aa)). 71-78 (DEMGLGKT) serves as a coordination point for ATP. A DEAH box motif is present at residues 174 to 177 (DEAH). Residues 351-513 (LLDKLLAFLY…QKPAADADLQ (163 aa)) enclose the Helicase C-terminal domain. A phosphoserine mark is found at serine 540, serine 607, serine 618, serine 628, and serine 636. The tract at residues 601–635 (TLLEKASQEGRSLRNKGSVLIPGLVEGSTKRKRVL) is regulatory linker segment (RLS). Residues 615-673 (NKGSVLIPGLVEGSTKRKRVLSPEELEDRQKKRQEAAAKRRRLIEEKKRQKEEAEHKKK) are required for ATPase activity. 2 disordered regions span residues 628-654 (STKR…AAKR) and 687-711 (LPSE…DYQD). Residues 638–675 (EELEDRQKKRQEAAAKRRRLIEEKKRQKEEAEHKKKMA) are a coiled coil. The span at 642-654 (DRQKKRQEAAAKR) shows a compositional bias: basic and acidic residues. A compositionally biased stretch (acidic residues) spans 690 to 711 (EESEPEDLENGEESSAELDYQD). Positions 704–897 (SAELDYQDPD…SSSSSRQLVP (194 aa)) constitute a Macro domain. A Phosphoserine modification is found at serine 891.

Belongs to the SNF2/RAD54 helicase family. Interacts with nucleosomes; interacts with the acidic patch of histones. Interacts (via macro domain) with PARP1; interacts only when PARP1 is poly-ADP-ribosylated (PARylated). Interacts with CIAO1. In terms of tissue distribution, frequently overexpressed in hepatomacellular carcinomas.

The protein localises to the nucleus. It is found in the chromosome. It catalyses the reaction ATP + H2O = ADP + phosphate + H(+). With respect to regulation, adopts an inactive conformation in absence of DNA damage. Binding to poly-ADP-ribosylated histones activates the ATP-dependent chromatin remodeler activity. ATP-dependent chromatin remodeler that mediates chromatin-remodeling following DNA damage. Recruited to DNA damage sites through interaction with poly-ADP-ribose: specifically recognizes and binds histones that are poly-ADP-ribosylated on serine residues in response to DNA damage. Poly-ADP-ribose-binding activates the ATP-dependent chromatin remodeler activity, thereby regulating chromatin during DNA repair. Catalyzes nucleosome sliding away from DNA breaks in an ATP-dependent manner. Chromatin remodeling activity promotes PARP2 removal from chromatin. The chain is Chromodomain-helicase-DNA-binding protein 1-like from Homo sapiens (Human).